The primary structure comprises 481 residues: Surface lipoprotein assembly modifier 1 (481 aa).

Residues 1–23 (MSIQTKFILFLSSSLFLTPYSVA) form the signal peptide. Residues 25–192 (EKSPQPHDGR…QYLSALNQRD (168 aa)) form an N-terminal domain region. The segment at 193-481 (QWKIQGGFSF…RIYVEISKTF (289 aa)) is C-terminal probable beta barrel. 14 consecutive transmembrane segments (beta stranded) span residues 194 to 204 (WKIQGGFSFLN), 233 to 243 (SYFGNAEKKWS), 248 to 258 (HFTKLSLEGSG), 271 to 281 (NARAGVGLGYQ), 285 to 295 (FELSLMPFTEK), 315 to 325 (SGARLDLSNWL), 329 to 338 (WQISTALEYG), 353 to 363 (YLASATLLYLA), 368 to 377 (YWFGGADYNR), 390 to 400 (KNVRLGWGQEW), 405 to 414 (STRLILNYAR), 432 to 441 (YASVLTIWHR), 448 to 458 (ITPKLSWSYQK), and 471 to 481 (NRIYVEISKTF).

The protein belongs to the Slam family.

The protein resides in the cell outer membrane. Functionally, required for correct export to the cell surface of some cell outer membrane lipoproteins. This Haemophilus influenzae (strain ATCC 51907 / DSM 11121 / KW20 / Rd) protein is Surface lipoprotein assembly modifier 1.